The following is a 429-amino-acid chain: Serine--tRNA ligase (429 aa).

Residue 235-237 (TAE) participates in L-serine binding. 266 to 268 (RSE) contributes to the ATP binding site. E289 is an L-serine binding site. Residue 353-356 (EISS) coordinates ATP. S389 lines the L-serine pocket.

The protein belongs to the class-II aminoacyl-tRNA synthetase family. Type-1 seryl-tRNA synthetase subfamily. As to quaternary structure, homodimer. The tRNA molecule binds across the dimer.

It is found in the cytoplasm. It catalyses the reaction tRNA(Ser) + L-serine + ATP = L-seryl-tRNA(Ser) + AMP + diphosphate + H(+). It carries out the reaction tRNA(Sec) + L-serine + ATP = L-seryl-tRNA(Sec) + AMP + diphosphate + H(+). It functions in the pathway aminoacyl-tRNA biosynthesis; selenocysteinyl-tRNA(Sec) biosynthesis; L-seryl-tRNA(Sec) from L-serine and tRNA(Sec): step 1/1. Its function is as follows. Catalyzes the attachment of serine to tRNA(Ser). Is also able to aminoacylate tRNA(Sec) with serine, to form the misacylated tRNA L-seryl-tRNA(Sec), which will be further converted into selenocysteinyl-tRNA(Sec). This Haemophilus influenzae (strain PittEE) protein is Serine--tRNA ligase.